A 404-amino-acid chain; its full sequence is Multidrug resistance protein MdtG (404 aa).

The next 11 membrane-spanning stretches (helical) occupy residues 19–39 (LGCF…PLYV), 56–76 (LVFS…GGLA), 90–110 (LGMA…QFLI), 113–133 (ALLG…ATQV), 144–164 (TLST…GLLA), 171–191 (PVFF…FFFI), 222–242 (LFVT…ILTL), 254–274 (IAFI…LSAP), 288–308 (ILIV…FVQT), 317–337 (FLLG…LVYN), and 376–396 (AVFC…WNSL).

This sequence belongs to the major facilitator superfamily. DHA1 family. MdtG (TC 2.A.1.2.20) subfamily.

The protein localises to the cell inner membrane. The chain is Multidrug resistance protein MdtG from Salmonella arizonae (strain ATCC BAA-731 / CDC346-86 / RSK2980).